A 941-amino-acid chain; its full sequence is Zinc finger protein 507 (941 aa).

Residue Ser-95 is modified to Phosphoserine. 2 consecutive C2H2-type zinc fingers follow at residues 122–144 (YQCS…VKQH) and 152–175 (LMCS…VSEH). Residues 165–177 (QELEAHVVSEHEN) are compositionally biased toward basic and acidic residues. The segment at 165–198 (QELEAHVVSEHENSASSQARSSPSGQGATERKSE) is disordered. Low complexity predominate over residues 178–192 (SASSQARSSPSGQGA). The segment at 237 to 259 (YRCLFCSYTCGQQRMLKTHAWKH) adopts a C2H2-type 3 zinc-finger fold. Ser-415 bears the Phosphoserine mark. The segment at 455 to 477 (ELSKGLAPDENAPPGRRRTNSES) is disordered. 5 consecutive C2H2-type zinc fingers follow at residues 630–652 (YRCR…LRVH), 658–680 (YQCP…MINH), 686–709 (HQCK…REQH), 746–768 (YRCD…RRVH), and 774–796 (YRCS…MWKH). A disordered region spans residues 823–856 (GKSRGKPLLTSSEERTGPTTGSPENLVSSSELTS). The span at 839–856 (GPTTGSPENLVSSSELTS) shows a compositional bias: polar residues. The C2H2-type 9 zinc finger occupies 899 to 921 (FCCCICGFESTSKESLLDHMKEH).

The protein belongs to the krueppel C2H2-type zinc-finger protein family.

It localises to the nucleus. In terms of biological role, may be involved in transcriptional regulation. This is Zinc finger protein 507 (Znf507) from Mus musculus (Mouse).